Consider the following 139-residue polypeptide: Small ribosomal subunit protein uS12 (139 aa).

The tract at residues 1-44 (MPTINQLVKKPRTSKVKKSTAPALNKGYNSHKKKATDLASPQKR) is disordered. The span at 9–18 (KKPRTSKVKK) shows a compositional bias: basic residues. 3-methylthioaspartic acid is present on Asp102.

This sequence belongs to the universal ribosomal protein uS12 family. As to quaternary structure, part of the 30S ribosomal subunit. Contacts proteins S8 and S17. May interact with IF1 in the 30S initiation complex.

In terms of biological role, with S4 and S5 plays an important role in translational accuracy. Its function is as follows. Interacts with and stabilizes bases of the 16S rRNA that are involved in tRNA selection in the A site and with the mRNA backbone. Located at the interface of the 30S and 50S subunits, it traverses the body of the 30S subunit contacting proteins on the other side and probably holding the rRNA structure together. The combined cluster of proteins S8, S12 and S17 appears to hold together the shoulder and platform of the 30S subunit. The protein is Small ribosomal subunit protein uS12 of Macrococcus caseolyticus (strain JCSC5402) (Macrococcoides caseolyticum).